Consider the following 68-residue polypeptide: Amphipathic peptide CT1 (68 aa).

An N-terminal signal peptide occupies residues 1–23; that stretch reads MKTQIVILIVAVLFLQLVSQSDA. L36 carries the post-translational modification Leucine amide. The propeptide occupies 40-68; sequence GLKNLDQYNDLFDGEISDADIKFLKDLMR.

Belongs to the non-disulfide-bridged peptide (NDBP) superfamily. Short antimicrobial peptide (group 4) family. As to expression, expressed by the venom gland.

Its subcellular location is the secreted. It localises to the target cell membrane. Amphipathic peptide that shows no antibacterial activity even at 50 uM but shows a low hemolytic activity against human erythrocytes. This Mesomexovis subcristatus (Scorpion) protein is Amphipathic peptide CT1.